Here is an 88-residue protein sequence, read N- to C-terminus: Protein MATERNALLY EXPRESSED GENE 2 (88 aa).

Positions 1–27 are cleaved as a signal peptide; it reads MEYRKRVDALVFFSLLLLGYFAAHAHG. Residues cysteine 65 and cysteine 87 are joined by a disulfide bond.

The protein belongs to the MEG family. In terms of tissue distribution, expressed exclusively in endosperm.

The protein is Protein MATERNALLY EXPRESSED GENE 2 (MEG2) of Zea mays (Maize).